The following is a 646-amino-acid chain: Threonine--tRNA ligase (646 aa).

One can recognise a TGS domain in the interval 1 to 61 (MIKITFPDGS…NEDADFVLYK (61 aa)). The interval 242–541 (DHRKIGKEMQ…LIEHTAGKFP (300 aa)) is catalytic. Cys337, His388, and His518 together coordinate Zn(2+).

Belongs to the class-II aminoacyl-tRNA synthetase family. In terms of assembly, homodimer. Zn(2+) is required as a cofactor.

It is found in the cytoplasm. The enzyme catalyses tRNA(Thr) + L-threonine + ATP = L-threonyl-tRNA(Thr) + AMP + diphosphate + H(+). In terms of biological role, catalyzes the attachment of threonine to tRNA(Thr) in a two-step reaction: L-threonine is first activated by ATP to form Thr-AMP and then transferred to the acceptor end of tRNA(Thr). Also edits incorrectly charged L-seryl-tRNA(Thr). The protein is Threonine--tRNA ligase of Bacteroides thetaiotaomicron (strain ATCC 29148 / DSM 2079 / JCM 5827 / CCUG 10774 / NCTC 10582 / VPI-5482 / E50).